Here is a 570-residue protein sequence, read N- to C-terminus: Ferroportin (570 aa).

The Cytoplasmic portion of the chain corresponds to 1 to 23 (MTKSRDQTHQEGCCGSLANYLTS). The chain crosses the membrane as a helical span at residues 24-53 (AKFLLYLGHSLSTWGDRMWHFAVSVFLVEL). Fe cation is bound by residues aspartate 39 and histidine 43. The Extracellular portion of the chain corresponds to 54–57 (YGNS). A helical transmembrane segment spans residues 58 to 84 (LLLTAVYGLVVAGSVLVLGAIIGDWVD). The Cytoplasmic segment spans residues 85-87 (KNA). The helical transmembrane segment at 88–118 (RLKVAQTSLVVQNVSVILCGIILMMVFLHKN) threads the bilayer. Over 119-126 (ELLNMYHG) the chain is Extracellular. The chain crosses the membrane as a helical span at residues 127–162 (WVLTVCYILIITIANIANLASTATAITIQRDWIVVV). The Cytoplasmic segment spans residues 163-164 (AG). A helical transmembrane segment spans residues 165-195 (ENRSRLADMNATIRRIDQLTNILAPMAVGQI). Over 196–202 (MTFGSPV) the chain is Extracellular. A helical membrane pass occupies residues 203–229 (IGCGFISGWNLVSMCVEYFLLWKVYQK). At 230–306 (TPALAVKAAL…DGWVSYYNQP (77 aa)) the chain is on the cytoplasmic side. A helical transmembrane segment spans residues 307-333 (VFLAGMGLAFLYMTVLGFDCITTGYAY). Cysteine 326 contacts Fe cation. Topologically, residues 334 to 338 (TQGLS) are extracellular. The chain crosses the membrane as a helical span at residues 339-366 (GSILSVLMGASAITGIMGTVAFTWLRRK). Residues 367–368 (CG) are Cytoplasmic-facing. A helical membrane pass occupies residues 369-391 (LVRTGLFSGLAQLSCLILCVISV). At 392–452 (FMPGSPLDLS…EMSTKSVPII (61 aa)) the chain is on the extracellular side. Residues 453-482 (SVSLLFAGVIAARIGLWSFDLTVTQLLQEN) form a helical membrane-spanning segment. At 483–487 (VIESE) the chain is on the cytoplasmic side. Residues 488-512 (RGIINGVQNSMNYLLDLLHFIMVIL) form a helical membrane-spanning segment. Histidine 506 is a binding site for Fe cation. At 513-515 (APN) the chain is on the extracellular side. A helical membrane pass occupies residues 516–541 (PEAFGLLVLISVSFVAMGHLMYFRFA). Residues 542–570 (QKTLGNQIFVCAPDEKEVTDESQPNTSVV) lie on the Cytoplasmic side of the membrane.

The protein belongs to the ferroportin (FP) (TC 2.A.100) family. SLC40A subfamily. Identified in a complex with STOM. Interacts with HAMP; affinity of the peptide hormone HAMP for SLC40A1 increases by 80-fold in the presence of iron and the interaction promotes SLC40A1 ubiquitination and degradation. Part of a complex composed of SLC40A1/ferroportin, TF/transferrin and HEPH/hephaestin that transfers iron from cells to transferrin. Polyubiquitinated by RNF217; leading to proteasomal degradation. Under conditions of high systemic iron levels, both the hormone peptide hepcidin/HAMP and holo(iron bound)-transferrin/TF induce the ubiquitination, internalization and proteasomal degradation of SLC40A1 to control iron release from cells.

The protein resides in the cell membrane. Its subcellular location is the basolateral cell membrane. It carries out the reaction Fe(2+)(in) = Fe(2+)(out). With respect to regulation, during elevated serum iron levels, liver-derived hepcidin/HAMP negatively regulates cell surface SLC40A1 by inducing its ubiquitination, internalization, and degradation. Indeed, hepcidin/HAMP affinity towards ferroportin/SLC40A1 increases by 80-fold in the presence of iron. Its function is as follows. Transports Fe(2+) from the inside of a cell to the outside of the cell, playing a key role for maintaining systemic iron homeostasis. Transports iron from intestinal, splenic, hepatic cells, macrophages and erythrocytes into the blood to provide iron to other tissues. Controls therefore dietary iron uptake, iron recycling by macrophages and erythrocytes, and release of iron stores in hepatocytes. When iron is in excess in serum, circulating HAMP/hepcidin levels increase resulting in a degradation of SLC40A1, thus limiting the iron efflux to plasma. The protein is Ferroportin of Rattus norvegicus (Rat).